The sequence spans 342 residues: Putative gluconeogenesis factor (342 aa).

Residues S318–R342 form a disordered region. T325 is modified (phosphothreonine). Positions G333–R342 are enriched in basic and acidic residues.

This sequence belongs to the gluconeogenesis factor family. In terms of processing, phosphorylated by PknA and/or PknB.

It localises to the cytoplasm. Functionally, required for morphogenesis under gluconeogenic growth conditions. This is Putative gluconeogenesis factor from Mycobacterium tuberculosis (strain CDC 1551 / Oshkosh).